Here is a 155-residue protein sequence, read N- to C-terminus: Large ribosomal subunit protein eL19 (155 aa).

The segment covering 66–84 (VRHLQRRKGRRRGMGRRKG) has biased composition (basic residues). Residues 66-85 (VRHLQRRKGRRRGMGRRKGV) form a disordered region.

Belongs to the eukaryotic ribosomal protein eL19 family. As to quaternary structure, part of the 50S ribosomal subunit.

Its function is as follows. Binds to the 23S rRNA. The chain is Large ribosomal subunit protein eL19 from Aeropyrum pernix (strain ATCC 700893 / DSM 11879 / JCM 9820 / NBRC 100138 / K1).